Consider the following 503-residue polypeptide: Na(+)-translocating NADH-quinone reductase subunit B (503 aa).

5 consecutive transmembrane segments (helical) span residues 55–75 (MMLV…NSGL), 85–105 (PQIM…SFVS), 120–142 (IFLP…FAII), 161–181 (ILPP…GVVI), and 186–206 (FGGT…FLFF). T248 is subject to FMN phosphoryl threonine. A run of 5 helical transmembrane segments spans residues 361–381 (TSTV…IASW), 387–407 (FGLS…LAAG), 417–437 (FFIP…LVFM), 452–472 (WFYG…NPAY), and 475–495 (GVML…RIAL).

This sequence belongs to the NqrB/RnfD family. Composed of six subunits; NqrA, NqrB, NqrC, NqrD, NqrE and NqrF. FMN is required as a cofactor.

The protein localises to the cell inner membrane. The catalysed reaction is a ubiquinone + n Na(+)(in) + NADH + H(+) = a ubiquinol + n Na(+)(out) + NAD(+). In terms of biological role, NQR complex catalyzes the reduction of ubiquinone-1 to ubiquinol by two successive reactions, coupled with the transport of Na(+) ions from the cytoplasm to the periplasm. NqrA to NqrE are probably involved in the second step, the conversion of ubisemiquinone to ubiquinol. This Chlamydia muridarum (strain MoPn / Nigg) protein is Na(+)-translocating NADH-quinone reductase subunit B.